The primary structure comprises 199 residues: dITP/XTP pyrophosphatase (199 aa).

12–17 (SGNAGK) is a binding site for substrate. D73 (proton acceptor) is an active-site residue. D73 provides a ligand contact to Mg(2+). Residues S74, 157–160 (FGYD), K180, and 185–186 (HR) contribute to the substrate site.

This sequence belongs to the HAM1 NTPase family. As to quaternary structure, homodimer. Mg(2+) serves as cofactor.

It catalyses the reaction XTP + H2O = XMP + diphosphate + H(+). It carries out the reaction dITP + H2O = dIMP + diphosphate + H(+). The enzyme catalyses ITP + H2O = IMP + diphosphate + H(+). Functionally, pyrophosphatase that catalyzes the hydrolysis of nucleoside triphosphates to their monophosphate derivatives, with a high preference for the non-canonical purine nucleotides XTP (xanthosine triphosphate), dITP (deoxyinosine triphosphate) and ITP. Seems to function as a house-cleaning enzyme that removes non-canonical purine nucleotides from the nucleotide pool, thus preventing their incorporation into DNA/RNA and avoiding chromosomal lesions. The protein is dITP/XTP pyrophosphatase of Neisseria meningitidis serogroup B (strain ATCC BAA-335 / MC58).